Consider the following 245-residue polypeptide: 1-(5-phosphoribosyl)-5-[(5-phosphoribosylamino)methylideneamino] imidazole-4-carboxamide isomerase (245 aa).

D8 acts as the Proton acceptor in catalysis. The Proton donor role is filled by D129.

Belongs to the HisA/HisF family.

The protein localises to the cytoplasm. The catalysed reaction is 1-(5-phospho-beta-D-ribosyl)-5-[(5-phospho-beta-D-ribosylamino)methylideneamino]imidazole-4-carboxamide = 5-[(5-phospho-1-deoxy-D-ribulos-1-ylimino)methylamino]-1-(5-phospho-beta-D-ribosyl)imidazole-4-carboxamide. It functions in the pathway amino-acid biosynthesis; L-histidine biosynthesis; L-histidine from 5-phospho-alpha-D-ribose 1-diphosphate: step 4/9. The chain is 1-(5-phosphoribosyl)-5-[(5-phosphoribosylamino)methylideneamino] imidazole-4-carboxamide isomerase from Geotalea daltonii (strain DSM 22248 / JCM 15807 / FRC-32) (Geobacter daltonii).